A 439-amino-acid chain; its full sequence is Lipid-A-disaccharide synthase (439 aa).

Residues 1–35 (MKEIGNRESGIVDGQRNGASVGSDPTALPIPHSPL) are disordered.

Belongs to the LpxB family.

It carries out the reaction a lipid X + a UDP-2-N,3-O-bis[(3R)-3-hydroxyacyl]-alpha-D-glucosamine = a lipid A disaccharide + UDP + H(+). It participates in bacterial outer membrane biogenesis; LPS lipid A biosynthesis. Functionally, condensation of UDP-2,3-diacylglucosamine and 2,3-diacylglucosamine-1-phosphate to form lipid A disaccharide, a precursor of lipid A, a phosphorylated glycolipid that anchors the lipopolysaccharide to the outer membrane of the cell. This chain is Lipid-A-disaccharide synthase, found in Xanthomonas euvesicatoria pv. vesicatoria (strain 85-10) (Xanthomonas campestris pv. vesicatoria).